The sequence spans 200 residues: MARCKS-related protein (200 aa).

A disordered region spans residues 1–200; the sequence is MGSQSSKAPR…PTPASAEQNE (200 aa). The N-myristoyl glycine moiety is linked to residue G2. The residue at position 14 (T14) is a Phosphothreonine. Positions 16 to 26 are enriched in low complexity; that stretch reads EEAAGASPAKA. 3 positions are modified to phosphoserine: S22, S36, and S48. Over residues 53–64 the composition is skewed to low complexity; that stretch reads GTDEAAGATGDA. Phosphoserine is present on S71. The span at 74 to 85 shows a compositional bias: basic and acidic residues; sequence AEAKGEVAPKET. T85 is modified (phosphothreonine). Residues 86–98 are compositionally biased toward basic residues; sequence PKKKKKFSFKKPF. Residues 87-110 are effector domain involved in lipid-binding and calmodulin-binding; the sequence is KKKKKFSFKKPFKLSGLSFKRNRK. Phosphoserine; by PKC is present on residues S93, S101, and S104. A Phosphoserine modification is found at S119. At S120 the chain carries Phosphoserine; by MAPK8. A phosphoserine mark is found at S132 and S135. At T148 the chain carries Phosphothreonine; by MAPK8. Phosphoserine is present on residues S151, S162, and S165. Low complexity predominate over residues 156–165; sequence AKGAEASAAS. T170 carries the post-translational modification Phosphothreonine. The segment covering 178-200 has biased composition (low complexity); sequence AAEPSTPSGPESGPTPASAEQNE. Position 183 is a phosphothreonine; by MAPK8 (T183). A Phosphothreonine modification is found at T192.

This sequence belongs to the MARCKS family. As to quaternary structure, binds to filamentous actin (F-actin), but not to monomeric G-actin, independently of its phosphorylation status. Interacts with calmodulin. Post-translationally, phosphorylated. Phosphorylation at Ser-120 and Thr-183 is non-redundantly catalyzed by MAPK8 in vivo. Phosphorylation at Thr-148 is preferentially catalyzed by MAPK8 in vivo, but this modification can also be catalyzed by other kinases in the absence of MAPK8. May be phosphorylated by protein kinase C, which disrupts the interaction with calmodulin. As to expression, expressed at high levels in brain cortex and hippocampus, including dentate gyrus, anterior olfactory nucleus, primary olfactory cortex, entorhinal cortex, medial preoptic area and dorsomedial hypothalamic nucleus (at protein level). Expressed in neuronal cells (at protein level). Detected in the retina. Strongly expressed in testis and uterus; expressed at lower levels in cerebellum, cerebrum, adipose tissue, spleen, kidney, thyroid, liver, lung, skeletal muscle and heart. Detected in T-cells and B-cells.

The protein resides in the cytoplasm. It localises to the cytoskeleton. The protein localises to the cell membrane. In terms of biological role, involved in the control of cell movement by regulating actin cytoskeleton homeostasis and filopodium and lamellipodium formation. When unphosphorylated, induces cell migration. When phosphorylated by MAPK8, induces actin bundles formation and stabilization, thereby reducing actin plasticity, hence restricting cell movement, including neuronal migration. May be involved in coupling the protein kinase C and calmodulin signal transduction systems. The chain is MARCKS-related protein (Marcksl1) from Mus musculus (Mouse).